A 190-amino-acid polypeptide reads, in one-letter code: dITP/XTP pyrophosphatase (190 aa).

A substrate-binding site is contributed by 10–15 (TTNKHK). The Mg(2+) site is built by glutamate 39 and aspartate 68. Residue aspartate 68 is the Proton acceptor of the active site. Residues alanine 69, 143–146 (FGYD), lysine 166, and 171–172 (HR) each bind substrate.

The protein belongs to the HAM1 NTPase family. In terms of assembly, homodimer. Mg(2+) is required as a cofactor.

The catalysed reaction is XTP + H2O = XMP + diphosphate + H(+). The enzyme catalyses dITP + H2O = dIMP + diphosphate + H(+). It catalyses the reaction ITP + H2O = IMP + diphosphate + H(+). Pyrophosphatase that catalyzes the hydrolysis of nucleoside triphosphates to their monophosphate derivatives, with a high preference for the non-canonical purine nucleotides XTP (xanthosine triphosphate), dITP (deoxyinosine triphosphate) and ITP. Seems to function as a house-cleaning enzyme that removes non-canonical purine nucleotides from the nucleotide pool, thus preventing their incorporation into DNA/RNA and avoiding chromosomal lesions. This is dITP/XTP pyrophosphatase from Hyperthermus butylicus (strain DSM 5456 / JCM 9403 / PLM1-5).